A 213-amino-acid polypeptide reads, in one-letter code: ATP synthase peripheral stalk subunit OSCP, mitochondrial (213 aa).

A mitochondrion-targeting transit peptide spans 1–23 (MAAPAVSGVSQQVRYFGTSVVRP). Residues 5-23 (AVSGVSQQVRYFGTSVVRP) carry the SIFI-degron motif. N6-acetyllysine occurs at positions 54, 60, 70, and 73. An N6-succinyllysine modification is found at K90. An N6-acetyllysine; alternate mark is found at K158 and K162. N6-succinyllysine; alternate is present on residues K158 and K162. An N6-acetyllysine mark is found at K172, K176, and K192. K199 carries the post-translational modification N6-succinyllysine.

Belongs to the ATPase delta chain family. Component of the ATP synthase complex composed at least of ATP5F1A/subunit alpha, ATP5F1B/subunit beta, ATP5MC1/subunit c (homooctomer), MT-ATP6/subunit a, MT-ATP8/subunit 8, ATP5ME/subunit e, ATP5MF/subunit f, ATP5MG/subunit g, ATP5MK/subunit k, ATP5MJ/subunit j, ATP5F1C/subunit gamma, ATP5F1D/subunit delta, ATP5F1E/subunit epsilon, ATP5PF/subunit F6, ATP5PB/subunit b, ATP5PD/subunit d, ATP5PO/subunit OSCP. ATP synthase complex consists of a soluble F(1) head domain (subunits alpha(3) and beta(3)) - the catalytic core - and a membrane F(0) domain - the membrane proton channel (subunits c, a, 8, e, f, g, k and j). These two domains are linked by a central stalk (subunits gamma, delta, and epsilon) rotating inside the F1 region and a stationary peripheral stalk (subunits F6, b, d, and OSCP). Acetylation at Lys-162 decreases ATP production. Deacetylated by SIRT3. Post-translationally, in response to mitochondrial stress, the precursor protein is ubiquitinated by the SIFI complex in the cytoplasm before mitochondrial import, leading to its degradation. Within the SIFI complex, UBR4 initiates ubiquitin chain that are further elongated or branched by KCMF1.

It localises to the mitochondrion. It is found in the mitochondrion inner membrane. In terms of biological role, subunit OSCP, of the mitochondrial membrane ATP synthase complex (F(1)F(0) ATP synthase or Complex V) that produces ATP from ADP in the presence of a proton gradient across the membrane which is generated by electron transport complexes of the respiratory chain. ATP synthase complex consist of a soluble F(1) head domain - the catalytic core - and a membrane F(1) domain - the membrane proton channel. These two domains are linked by a central stalk rotating inside the F(1) region and a stationary peripheral stalk. During catalysis, ATP synthesis in the catalytic domain of F(1) is coupled via a rotary mechanism of the central stalk subunits to proton translocation. In vivo, can only synthesize ATP although its ATP hydrolase activity can be activated artificially in vitro. Part of the complex F(0) domain. Part of the complex F(0) domain and the peripheric stalk, which acts as a stator to hold the catalytic alpha(3)beta(3) subcomplex and subunit a/ATP6 static relative to the rotary elements. In Callithrix jacchus (White-tufted-ear marmoset), this protein is ATP synthase peripheral stalk subunit OSCP, mitochondrial.